Here is a 102-residue protein sequence, read N- to C-terminus: Small ribosomal subunit protein uS10 (102 aa).

It belongs to the universal ribosomal protein uS10 family. In terms of assembly, part of the 30S ribosomal subunit.

Its function is as follows. Involved in the binding of tRNA to the ribosomes. In Bacillus cereus (strain ATCC 10987 / NRS 248), this protein is Small ribosomal subunit protein uS10.